Here is a 25-residue protein sequence, read N- to C-terminus: GLWDDLKAAAKKVVSSLASAAIEKL.

Expressed by the skin glands of male frogs.

The protein localises to the secreted. Its function is as follows. Stimulates aggressive behavior in male frogs. No effect on female frogs. The polypeptide is Aggression-stimulating peptide (Leptodactylus fallax (Mountain chicken frog)).